A 279-amino-acid chain; its full sequence is Membrane protein insertase YidC (279 aa).

The signal sequence occupies residues 1–22; sequence MKHLKRNMALLSVAALSFILTA. C23 carries N-palmitoyl cysteine lipidation. C23 carries the S-diacylglycerol cysteine lipid modification. Helical transmembrane passes span 35 to 55, 59 to 79, 129 to 149, 170 to 190, and 210 to 230; these read IWDGVIVYNFSRFIIYLSKLF, YGWGIIVFTIIIRIIILPLMI, MAGCLPLIIQLPVMYALYAAV, PYFILPILAALFTFMSTWLSM, and PLVILITALNFPAAITLYWVV. Residues 253–268 are compositionally biased toward basic and acidic residues; the sequence is EEKIQTEKAKRKAIEK. Positions 253 to 279 are disordered; that stretch reads EEKIQTEKAKRKAIEKAKRRAMKSKRK. Residues 269-279 show a composition bias toward basic residues; sequence AKRRAMKSKRK.

It belongs to the OXA1/ALB3/YidC family. Type 2 subfamily.

The protein resides in the cell membrane. Its function is as follows. Required for the insertion and/or proper folding and/or complex formation of integral membrane proteins into the membrane. Involved in integration of membrane proteins that insert both dependently and independently of the Sec translocase complex, as well as at least some lipoproteins. This is Membrane protein insertase YidC from Pediococcus pentosaceus (strain ATCC 25745 / CCUG 21536 / LMG 10740 / 183-1w).